We begin with the raw amino-acid sequence, 405 residues long: 4-hydroxy-3-methylbut-2-enyl diphosphate reductase (405 aa).

Residue C66 coordinates [4Fe-4S] cluster. H96 serves as a coordination point for (2E)-4-hydroxy-3-methylbut-2-enyl diphosphate. H96 contributes to the dimethylallyl diphosphate binding site. H96 contributes to the isopentenyl diphosphate binding site. C158 serves as a coordination point for [4Fe-4S] cluster. H186 contacts (2E)-4-hydroxy-3-methylbut-2-enyl diphosphate. H186 contacts dimethylallyl diphosphate. H186 is a binding site for isopentenyl diphosphate. Residue E188 is the Proton donor of the active site. T251 is a (2E)-4-hydroxy-3-methylbut-2-enyl diphosphate binding site. Residue C289 coordinates [4Fe-4S] cluster. (2E)-4-hydroxy-3-methylbut-2-enyl diphosphate contacts are provided by S318, S319, N320, and S380. Dimethylallyl diphosphate is bound by residues S318, S319, N320, and S380. Isopentenyl diphosphate-binding residues include S318, S319, N320, and S380.

The protein belongs to the IspH family. Requires [4Fe-4S] cluster as cofactor.

It carries out the reaction isopentenyl diphosphate + 2 oxidized [2Fe-2S]-[ferredoxin] + H2O = (2E)-4-hydroxy-3-methylbut-2-enyl diphosphate + 2 reduced [2Fe-2S]-[ferredoxin] + 2 H(+). The enzyme catalyses dimethylallyl diphosphate + 2 oxidized [2Fe-2S]-[ferredoxin] + H2O = (2E)-4-hydroxy-3-methylbut-2-enyl diphosphate + 2 reduced [2Fe-2S]-[ferredoxin] + 2 H(+). The protein operates within isoprenoid biosynthesis; dimethylallyl diphosphate biosynthesis; dimethylallyl diphosphate from (2E)-4-hydroxy-3-methylbutenyl diphosphate: step 1/1. It functions in the pathway isoprenoid biosynthesis; isopentenyl diphosphate biosynthesis via DXP pathway; isopentenyl diphosphate from 1-deoxy-D-xylulose 5-phosphate: step 6/6. Catalyzes the conversion of 1-hydroxy-2-methyl-2-(E)-butenyl 4-diphosphate (HMBPP) into a mixture of isopentenyl diphosphate (IPP) and dimethylallyl diphosphate (DMAPP). Acts in the terminal step of the DOXP/MEP pathway for isoprenoid precursor biosynthesis. This chain is 4-hydroxy-3-methylbut-2-enyl diphosphate reductase, found in Cyanothece sp. (strain PCC 7425 / ATCC 29141).